A 758-amino-acid chain; its full sequence is Translation initiation factor IF-2 (758 aa).

Residues 55–168 are disordered; it reads EKNVGKQATQ…KTHQPSIPVK (114 aa). Composition is skewed to polar residues over residues 60–78 and 86–95; these read KQAT…QQNH and QRQQSATSKP. Low complexity predominate over residues 96–136; the sequence is KVNNQQHSNSSNEKSKNTKGNQNRNMTQNNNNNNNNNNNNR. The 170-residue stretch at 259 to 428 folds into the tr-type G domain; sequence ERPPVVTIMG…LLVAEVGELK (170 aa). The G1 stretch occupies residues 268–275; the sequence is GHVDHGKT. Residue 268–275 participates in GTP binding; the sequence is GHVDHGKT. Positions 293 to 297 are G2; the sequence is GITQH. The tract at residues 314–317 is G3; it reads DTPG. Residues 314 to 318 and 368 to 371 each bind GTP; these read DTPGH and NKMD. Residues 368 to 371 are G4; that stretch reads NKMD. The G5 stretch occupies residues 404-406; that stretch reads SAL.

The protein belongs to the TRAFAC class translation factor GTPase superfamily. Classic translation factor GTPase family. IF-2 subfamily.

It is found in the cytoplasm. One of the essential components for the initiation of protein synthesis. Protects formylmethionyl-tRNA from spontaneous hydrolysis and promotes its binding to the 30S ribosomal subunits. Also involved in the hydrolysis of GTP during the formation of the 70S ribosomal complex. The sequence is that of Translation initiation factor IF-2 from Lysinibacillus sphaericus (strain C3-41).